The primary structure comprises 453 residues: Ribulose bisphosphate carboxylase large chain (453 aa).

Residues 1-2 (MS) constitute a propeptide that is removed on maturation. Pro-3 is modified (N-acetylproline). An N6,N6,N6-trimethyllysine modification is found at Lys-14. Asn-123 and Thr-173 together coordinate substrate. The Proton acceptor role is filled by Lys-175. Lys-177 contacts substrate. The Mg(2+) site is built by Lys-201, Asp-203, and Glu-204. Lys-201 is subject to N6-carboxylysine. His-294 (proton acceptor) is an active-site residue. Substrate contacts are provided by Arg-295, His-327, and Ser-379.

The protein belongs to the RuBisCO large chain family. Type I subfamily. Heterohexadecamer of 8 large chains and 8 small chains; disulfide-linked. The disulfide link is formed within the large subunit homodimers. The cofactor is Mg(2+). The disulfide bond which can form in the large chain dimeric partners within the hexadecamer appears to be associated with oxidative stress and protein turnover.

It is found in the plastid. The protein resides in the chloroplast. The enzyme catalyses 2 (2R)-3-phosphoglycerate + 2 H(+) = D-ribulose 1,5-bisphosphate + CO2 + H2O. It carries out the reaction D-ribulose 1,5-bisphosphate + O2 = 2-phosphoglycolate + (2R)-3-phosphoglycerate + 2 H(+). Functionally, ruBisCO catalyzes two reactions: the carboxylation of D-ribulose 1,5-bisphosphate, the primary event in carbon dioxide fixation, as well as the oxidative fragmentation of the pentose substrate in the photorespiration process. Both reactions occur simultaneously and in competition at the same active site. The protein is Ribulose bisphosphate carboxylase large chain of Galium corsicum.